A 378-amino-acid polypeptide reads, in one-letter code: Pulmonary surfactant-associated protein D (378 aa).

The N-terminal stretch at 1–20 (MLLLPLSVLILLTQPPRSLG) is a signal peptide. 2 positions are modified to S-nitrosocysteine: Cys-35 and Cys-40. The tract at residues 43–221 (MENGLPGRDG…ERGAKGESGL (179 aa)) is disordered. Residues 46-222 (GLPGRDGRDG…RGAKGESGLP (177 aa)) enclose the Collagen-like domain. The segment covering 50–65 (RDGRDGREGPRGEKGD) has biased composition (basic and acidic residues). The residue at position 78 (Pro-78) is a 4-hydroxyproline. Lys-87 carries the 5-hydroxylysine modification. A glycan (N-linked (GlcNAc...) asparagine) is linked at Asn-90. Pro-96 bears the 4-hydroxyproline mark. Lys-99 bears the 5-hydroxylysine mark. Positions 105 to 114 (CGPPGPPGIP) are enriched in pro residues. Residues 137–146 (PKGETGPKGE) are compositionally biased toward low complexity. 4-hydroxyproline is present on residues Pro-171 and Pro-177. The segment covering 173–197 (ERGAPGSAGAAGPAGATGPQGPSGA) has biased composition (low complexity). Residues 204-216 (KGDRGPPGERGAK) are compositionally biased toward basic and acidic residues. A coiled-coil region spans residues 223–254 (GITALRQQVETLQGQVQRLQKAFSQYKKVELF). In terms of domain architecture, C-type lectin spans 260–378 (VGEKIFKTGG…GELRLVICEF (119 aa)). Disulfide bonds link Cys-281/Cys-376 and Cys-354/Cys-368. N-linked (GlcNAc...) asparagine glycosylation occurs at Asn-323.

Belongs to the SFTPD family. In terms of assembly, oligomeric complex of 4 set of homotrimers. Post-translationally, hydroxylation on proline residues within the sequence motif, GXPG, is most likely to be 4-hydroxy as this fits the requirement for 4-hydroxylation in vertebrates. In terms of processing, S-nitrosylation at Cys-35 and Cys-40 alters the quaternary structure which results in a pro-inflammatory chemoattractive signaling activity with macrophages.

The protein localises to the secreted. Its subcellular location is the extracellular space. It localises to the extracellular matrix. The protein resides in the surface film. Functionally, contributes to the lung's defense against inhaled microorganisms, organic antigens and toxins. Interacts with compounds such as bacterial lipopolysaccharides, oligosaccharides and fatty acids and modulates leukocyte action in immune response. May participate in the extracellular reorganization or turnover of pulmonary surfactant. Binds strongly maltose residues and to a lesser extent other alpha-glucosyl moieties. The protein is Pulmonary surfactant-associated protein D (SFTPD) of Sus scrofa (Pig).